Reading from the N-terminus, the 78-residue chain is Small ribosomal subunit protein bS16 (78 aa).

This sequence belongs to the bacterial ribosomal protein bS16 family.

This chain is Small ribosomal subunit protein bS16, found in Thermodesulfovibrio yellowstonii (strain ATCC 51303 / DSM 11347 / YP87).